The chain runs to 442 residues: Adenylosuccinate synthetase (442 aa).

GTP is bound by residues 25–31 (GDEGKGK), 53–55 (GHT), and Lys-62. Residue Asp-26 is the Proton acceptor of the active site. Positions 26 and 53 each coordinate Mg(2+). IMP is bound by residues 26-29 (DEGK) and 51-54 (NAGH). The active-site Proton donor is His-54. Residues Thr-141, Arg-155, Asn-232, and Thr-247 each contribute to the IMP site. GTP is bound at residue Thr-307. 307–313 (TTTKRPR) lines the substrate pocket. Position 311 (Arg-311) interacts with IMP. Residues Arg-313, 339–341 (KLD), and 425–427 (GVG) contribute to the GTP site.

It belongs to the adenylosuccinate synthetase family. In terms of assembly, homodimer. Mg(2+) serves as cofactor.

It localises to the cytoplasm. It carries out the reaction IMP + L-aspartate + GTP = N(6)-(1,2-dicarboxyethyl)-AMP + GDP + phosphate + 2 H(+). It participates in purine metabolism; AMP biosynthesis via de novo pathway; AMP from IMP: step 1/2. Plays an important role in the salvage pathway for purine nucleotide biosynthesis. Catalyzes the first committed step in the biosynthesis of AMP from IMP. The protein is Adenylosuccinate synthetase (Adss) of Plasmodium falciparum (isolate 3D7).